The following is an 874-amino-acid chain: Putative disease resistance protein At5g05400 (874 aa).

Residues 22–74 (LSRNQNRFRNLVDHVAALKKTVRQLEARRDDLLKRIKVQEDRGLNLLDEVQQW) adopt a coiled-coil conformation. The NB-ARC domain occupies 139 to 434 (AQKGPIPKVE…GQGIILGSKG (296 aa)). Residue 182–189 (GMGGVGKT) participates in ATP binding. 7 LRR repeats span residues 483–505 (QKNV…EDQK), 506–527 (AVRR…LHCP), 528–548 (KLET…EFLS), 552–574 (ILMV…SPLY), 575–597 (SLRF…YALR), 598–620 (NLLY…HDLP), and 621–642 (NLEV…VRQI).

The protein belongs to the disease resistance NB-LRR family.

In terms of biological role, potential disease resistance protein. This is Putative disease resistance protein At5g05400 from Arabidopsis thaliana (Mouse-ear cress).